A 172-amino-acid chain; its full sequence is C-phycocyanin beta chain (172 aa).

N72 carries the N4-methylasparagine modification. (2R,3E)-phycocyanobilin is bound by residues C82 and C153.

This sequence belongs to the phycobiliprotein family. In terms of assembly, heterodimer of an alpha and a beta subunit, which further assembles into trimers and the trimers into hexamers. The basic functional unit of phycobiliproteins is a ring-shaped hexamer formed from two back-to-back trimers contacting via the alpha chain subunits. The trimers are composed of alpha/beta subunit heterodimers arranged around a three-fold axis of symmetry. The phycoerythrins also contain a gamma subunit which is located in the center of the hexamer. Contains two covalently linked bilin chromophores.

Its subcellular location is the plastid. The protein localises to the chloroplast thylakoid membrane. Its function is as follows. Light-harvesting photosynthetic bile pigment-protein from the phycobiliprotein complex (phycobilisome, PBS). Phycocyanin is the major phycobiliprotein in the PBS rod. This is C-phycocyanin beta chain (cpcB) from Pyropia haitanensis (Red seaweed).